The chain runs to 1374 residues: DNA-directed RNA polymerase subunit beta' (1374 aa).

Zn(2+) is bound by residues Cys71, Cys73, Cys86, and Cys89. Mg(2+)-binding residues include Asp462, Asp464, and Asp466. The Zn(2+) site is built by Cys810, Cys884, Cys891, and Cys894.

Belongs to the RNA polymerase beta' chain family. As to quaternary structure, the RNAP catalytic core consists of 2 alpha, 1 beta, 1 beta' and 1 omega subunit. When a sigma factor is associated with the core the holoenzyme is formed, which can initiate transcription. Mg(2+) serves as cofactor. Zn(2+) is required as a cofactor.

It catalyses the reaction RNA(n) + a ribonucleoside 5'-triphosphate = RNA(n+1) + diphosphate. Functionally, DNA-dependent RNA polymerase catalyzes the transcription of DNA into RNA using the four ribonucleoside triphosphates as substrates. The chain is DNA-directed RNA polymerase subunit beta' from Rickettsia massiliae (strain Mtu5).